Here is a 614-residue protein sequence, read N- to C-terminus: Allergen Ara h 1, clone P17 (614 aa).

Residues 1–25 (MRGRVSPLMLLLGILVLASVSATQA) form the signal peptide. Disordered regions lie at residues 72 to 177 (DTGA…RRFS), 334 to 356 (NAGGEQEERGQRRRSTRSSDNEG), 372 to 397 (HAKSVSKKGSEEEDITNPINLRDGEP), and 464 to 491 (KEQQQRGRREQEWEEEEEDEEEEGSNRE). A compositionally biased stretch (basic and acidic residues) spans 81 to 132 (PPGERTRGRQPGDYDDDRRQPRREEGGRWGPAEPREREREEDWRQPREDWRR). Residues 169–327 (FYFPSRRFST…AFNAEFNEIR (159 aa)) form the Cupin type-1 1 domain. In terms of domain architecture, Cupin type-1 2 spans 390-566 (INLRDGEPDL…AFPGSGEQVE (177 aa)). Over residues 464–474 (KEQQQRGRREQ) the composition is skewed to basic and acidic residues. Positions 475-486 (EWEEEEEDEEEE) are enriched in acidic residues. N516 is a glycosylation site (N-linked (GlcNAc...) asparagine). A disordered region spans residues 572–614 (QRESHFVSARPQSQSPSSPEKEDQEEENQGGKGPLLSILKAFN).

Belongs to the 7S seed storage protein family.

The chain is Allergen Ara h 1, clone P17 from Arachis hypogaea (Peanut).